Here is a 790-residue protein sequence, read N- to C-terminus: Probable E3 ubiquitin-protein ligase MARCHF10 (790 aa).

Residues 33-240 (LKRQEHKKEP…PQNEPHTALS (208 aa)) form a disordered region. The span at 34–48 (KRQEHKKEPNEKKQE) shows a compositional bias: basic and acidic residues. A compositionally biased stretch (low complexity) spans 61–70 (FSSGSSCKQS). Ser-78 carries the phosphoserine modification. A compositionally biased stretch (basic and acidic residues) spans 218-227 (PLERQKKGDP). Positions 230-240 (RPQNEPHTALS) are enriched in polar residues. Residues 284-308 (LSLNNEQENYDTEEETRTEEELLLA) are a coiled coil. Disordered regions lie at residues 323-416 (GTSA…EDVS) and 507-569 (LSPI…RHLQ). 3 stretches are compositionally biased toward polar residues: residues 355–370 (RKTS…SSPG), 406–416 (GVTQVSAEDVS), and 511–520 (RNRNPSAASE). Basic and acidic residues predominate over residues 521-533 (SHSEDTQGEEERA). Residues 534-563 (STSQAQESPLLSDLPNPQSSMALGDSPSSP) are compositionally biased toward polar residues. Residues 633–703 (DSEEEGDLCR…EMCKQGLLVD (71 aa)) form an RING-CH-type zinc finger. Residues Cys-641, Cys-644, Cys-659, Cys-661, His-669, Cys-672, Cys-693, and Cys-696 each contribute to the Zn(2+) site. The disordered stretch occupies residues 757 to 790 (ERMSRNYPQPRPEESESSESGDGNESNVYPGRVI). The span at 774–783 (SESGDGNESN) shows a compositional bias: low complexity.

The enzyme catalyses S-ubiquitinyl-[E2 ubiquitin-conjugating enzyme]-L-cysteine + [acceptor protein]-L-lysine = [E2 ubiquitin-conjugating enzyme]-L-cysteine + N(6)-ubiquitinyl-[acceptor protein]-L-lysine.. It participates in protein modification; protein ubiquitination. Its function is as follows. E3 ubiquitin-protein ligase. E3 ubiquitin ligases accept ubiquitin from an E2 ubiquitin-conjugating enzyme in the form of a thioester and then directly transfer the ubiquitin to targeted substrates. The protein is Probable E3 ubiquitin-protein ligase MARCHF10 (Marchf10) of Rattus norvegicus (Rat).